A 173-amino-acid polypeptide reads, in one-letter code: Shikimate kinase (173 aa).

14 to 19 lines the ATP pocket; sequence GAGKST. S18 lines the Mg(2+) pocket. Positions 36, 60, and 82 each coordinate substrate. ATP is bound at residue R120. R140 is a substrate binding site. Q157 is a binding site for ATP.

This sequence belongs to the shikimate kinase family. In terms of assembly, monomer. The cofactor is Mg(2+).

The protein localises to the cytoplasm. It carries out the reaction shikimate + ATP = 3-phosphoshikimate + ADP + H(+). Its pathway is metabolic intermediate biosynthesis; chorismate biosynthesis; chorismate from D-erythrose 4-phosphate and phosphoenolpyruvate: step 5/7. Catalyzes the specific phosphorylation of the 3-hydroxyl group of shikimic acid using ATP as a cosubstrate. This is Shikimate kinase from Buchnera aphidicola subsp. Schizaphis graminum (strain Sg).